We begin with the raw amino-acid sequence, 994 residues long: Beta-galactosidase (994 aa).

Catalysis depends on glutamate 437, which acts as the Proton donor. Glutamate 510 serves as the catalytic Nucleophile.

It belongs to the glycosyl hydrolase 2 family.

It carries out the reaction Hydrolysis of terminal non-reducing beta-D-galactose residues in beta-D-galactosides.. The sequence is that of Beta-galactosidase (lacZ) from Staphylococcus xylosus.